Reading from the N-terminus, the 240-residue chain is Dihydromonapterin reductase (240 aa).

The active-site Proton acceptor is the Y152.

This sequence belongs to the short-chain dehydrogenases/reductases (SDR) family. FolM subfamily.

The enzyme catalyses (6S)-5,6,7,8-tetrahydrofolate + NADP(+) = 7,8-dihydrofolate + NADPH + H(+). The catalysed reaction is 7,8-dihydromonapterin + NADPH + H(+) = 5,6,7,8-tetrahydromonapterin + NADP(+). Its function is as follows. Catalyzes the reduction of dihydromonapterin to tetrahydromonapterin. Also has lower activity with dihydrofolate. The polypeptide is Dihydromonapterin reductase (folM) (Escherichia coli O6:H1 (strain CFT073 / ATCC 700928 / UPEC)).